We begin with the raw amino-acid sequence, 289 residues long: Oxaloacetate decarboxylase 1 (289 aa).

Ser50 contributes to the substrate binding site. Asp88 provides a ligand contact to Mg(2+). Substrate contacts are provided by Arg159 and His235.

It belongs to the isocitrate lyase/PEP mutase superfamily. Oxaloacetate decarboxylase family. In terms of assembly, homotetramer; dimer of dimers. The cofactor is Mg(2+).

It carries out the reaction oxaloacetate + H(+) = pyruvate + CO2. In terms of biological role, catalyzes the decarboxylation of oxaloacetate into pyruvate. Seems to play a role in maintaining cellular concentrations of bicarbonate and pyruvate. This is Oxaloacetate decarboxylase 1 from Pseudomonas fluorescens (strain Pf0-1).